The chain runs to 372 residues: Pristinol synthase (372 aa).

The segment covering 1 to 12 (MAHETTSGRRLP) has biased composition (basic and acidic residues). Positions 1–23 (MAHETTSGRRLPDPTSPSDPTRR) are disordered. Positions 100 and 104 each coordinate Mg(2+). The DDXXD motif signature appears at 100 to 104 (DDQFD). R197 is a binding site for substrate. Mg(2+)-binding residues include N243 and S247. Residue K250 participates in substrate binding. E251 is a binding site for Mg(2+). 337-338 (RY) is a binding site for substrate. The interval 349-372 (GRRRPWDGLTTATGTASPRHPRRA) is disordered.

This sequence belongs to the terpene synthase family. The cofactor is Mg(2+).

The enzyme catalyses (2E,6E)-farnesyl diphosphate + H2O = (+)-(2S,3R,9R)-pristinol + diphosphate. It functions in the pathway secondary metabolite biosynthesis; terpenoid biosynthesis. Functionally, catalyzes the conversion of (2E,6E)-farnesyl diphosphate (FPP) to yield a new 5-8 bicyclic (pristinane) sesquiterpenol (+)-(2S,3R,9R)-pristinol via a 1,11-cyclization, which requires the abstraction of the pyrophosphate from FPP to yield the humulyl cation. The only accepted substrate is farnesyl diphosphate (FPP). This is Pristinol synthase from Streptomyces pristinaespiralis (strain ATCC 25486 / DSM 40338 / CBS 914.69 / JCM 4507 / KCC S-0507 / NBRC 13074 / NRRL 2958 / 5647).